The chain runs to 556 residues: Threonylcarbamoyladenosine tRNA methylthiotransferase (556 aa).

The segment at 17 to 57 is disordered; the sequence is SATDPKPHDRQSARKNIVPRARKRNKNNIQEEEPPADSTIP. Residues 60–168 form the MTTase N-terminal domain; sequence QKIWIRTWGC…VVEVVEETIK (109 aa). Positions 69, 105, 134, 210, 214, and 217 each coordinate [4Fe-4S] cluster. The Radical SAM core domain maps to 196–427; it reads RKNPLIEIIS…QLFHSYDPYD (232 aa). In terms of domain architecture, TRAM spans 427-489; sequence DHKIGQKQQV…KHFMKGQPVQ (63 aa). The helical transmembrane segment at 536–556 threads the bilayer; sequence VFLFLTALLAAVIAFVGTKLV.

This sequence belongs to the methylthiotransferase family. CDKAL1 subfamily. Requires [4Fe-4S] cluster as cofactor.

It localises to the endoplasmic reticulum membrane. The enzyme catalyses N(6)-L-threonylcarbamoyladenosine(37) in tRNA + (sulfur carrier)-SH + AH2 + 2 S-adenosyl-L-methionine = 2-methylsulfanyl-N(6)-L-threonylcarbamoyladenosine(37) in tRNA + (sulfur carrier)-H + 5'-deoxyadenosine + L-methionine + A + S-adenosyl-L-homocysteine + 2 H(+). In terms of biological role, catalyzes the methylthiolation of N6-threonylcarbamoyladenosine (t(6)A), leading to the formation of 2-methylthio-N6-threonylcarbamoyladenosine (ms(2)t(6)A) at position 37 in tRNAs that read codons beginning with adenine. The chain is Threonylcarbamoyladenosine tRNA methylthiotransferase (cdkal1) from Xenopus laevis (African clawed frog).